The following is a 931-amino-acid chain: MSKSFAYRHIWCFWRFNTPLLWFPQPLKYWPAFQQSHTFNSMSVFKNDNAIANQTTVNESDVKRNVEKINDIYECSNNTKSPCFPNSDSRIPLVNWKTSTNPTLQVRAYMLDLLLPFFTLDLLPFLNKVCECCNHMLLDNPKIKQDLPFAFCYLFSSYFSYKSSRQYTCSSEEISKVFRHLNRLGGSEYVLHLFAQIPKALCKELTDVRTLNHPLRSIFTFCFKNISNPPNLLKLLTKLYPRSDRANEVLYTQYLGFLTKRGDYQIAIYMFDEMYRTHHWSSFTACRLMIESLVRQNKFEEAISLYKKIIAKRPKIARDKKILNLLLYISTVSNRSPDAFKLALQSISNANQIPSFDVFSRLMSALVKYNMTEMILPLVKQYDHKFRNLYSPNIFLSIVQALVFCGDMVNIQRWYNMSRVNSELSRIKHLLNCFLNSSTVSLDVSMVLELLRDLKKKKIKVDERTLVICITIFSRRKDLFAMEKIHQYFSDQGIKTSNQAYAALLDAYIEAEDTEKIELYLGKIRRLGITEDVSINRMLMRLALDRLDWDLLEQCTKVAERKDPEGQDYLSTITMLYHVRQHELNLALRIFSGIQKPNVVHYSIAATVLGNLNQLDQLLLLEKRMESEGKAPTALSLVAFVSSYCKQGAEGLDEAKRYMSKNFQPDKRALLFNPRTANDMTYPPSLFSSLIKEYTSLGDIKEAKQVLSTYLEYFSKNITSKPDIPFAIASMRLYCSLHDTVLSRQFWDLILQVAQQNFITTDIAAVVDDKNIPSPSGVIPAYKSALNVAAETYFSFLASVNSFQELDQEWSRLEKLGFEYDDSLQNKRIIWLLYDDRLDAAIKRVYNIFLSSKRIEELIPDASSQNSIISFFLSPDSPLYFSTLKALRDKLDMAVEDDFVRISQGILVPTVKYLQTIRRDNEILFNLLAKV.

The transit peptide at 1 to 16 (MSKSFAYRHIWCFWRF) directs the protein to the mitochondrion. 7 PPR repeats span residues 247 to 277 (NEVL…MYRT), 282 to 316 (SFTA…RPKI), 429 to 461 (HLLN…KIKV), 462 to 496 (DERT…GIKT), 497 to 531 (SNQA…GITE), 598 to 632 (NVVH…GKAP), and 683 to 713 (PPSL…YLEY).

In terms of assembly, component of the MRH5C complex, composed of mrh5, ppr4, mtf2, and sls1. Proteins mtf2 and sls1 form a subcomplex that serves as a scaffold to bring mrh5 and ppr4 together. The MRH5C complex associates with the small subunit of the mitochondrial ribosome.

The protein localises to the mitochondrion. In terms of biological role, RNA-binding translation activation factor that as part of the MRH5C complex specifically recruits cox1 mRNA to the mitochondrial ribosome for translation initiation. The polypeptide is Mitochondrial cox1 translation regulator ppr4 (Schizosaccharomyces pombe (strain 972 / ATCC 24843) (Fission yeast)).